The primary structure comprises 149 residues: Large ribosomal subunit protein uL15 (149 aa).

2 stretches are compositionally biased toward basic residues: residues 1-14 (MPSRFTKTRKHRGH) and 21-30 (RIGKHRKHPG). The disordered stretch occupies residues 1-39 (MPSRFTKTRKHRGHVSAGKGRIGKHRKHPGGRGMAGGQH). 2 short sequence motifs (nuclear localization signal) span residues 7–13 (KTRKHRG) and 24–30 (KHRKHPG). A Glycyl lysine isopeptide (Lys-Gly) (interchain with G-Cter in ubiquitin) cross-link involves residue Lys-96.

It belongs to the universal ribosomal protein uL15 family. Component of the large ribosomal subunit (LSU). Mature yeast ribosomes consist of a small (40S) and a large (60S) subunit. The 40S small subunit contains 1 molecule of ribosomal RNA (18S rRNA) and 33 different proteins (encoded by 57 genes). The large 60S subunit contains 3 rRNA molecules (25S, 5.8S and 5S rRNA) and 46 different proteins (encoded by 81 genes).

The protein resides in the cytoplasm. Functionally, component of the ribosome, a large ribonucleoprotein complex responsible for the synthesis of proteins in the cell. The small ribosomal subunit (SSU) binds messenger RNAs (mRNAs) and translates the encoded message by selecting cognate aminoacyl-transfer RNA (tRNA) molecules. The large subunit (LSU) contains the ribosomal catalytic site termed the peptidyl transferase center (PTC), which catalyzes the formation of peptide bonds, thereby polymerizing the amino acids delivered by tRNAs into a polypeptide chain. The nascent polypeptides leave the ribosome through a tunnel in the LSU and interact with protein factors that function in enzymatic processing, targeting, and the membrane insertion of nascent chains at the exit of the ribosomal tunnel. This chain is Large ribosomal subunit protein uL15, found in Saccharomyces cerevisiae (strain ATCC 204508 / S288c) (Baker's yeast).